A 158-amino-acid chain; its full sequence is Superoxide dismutase [Cu-Zn] (158 aa).

Positions 46, 48, and 63 each coordinate Cu cation. Cys-57 and Cys-149 are joined by a disulfide. Zn(2+) contacts are provided by His-63, His-71, His-80, and Asp-83. His-120 is a binding site for Cu cation.

This sequence belongs to the Cu-Zn superoxide dismutase family. Homodimer. Requires Cu cation as cofactor. Zn(2+) is required as a cofactor.

It localises to the cytoplasm. The enzyme catalyses 2 superoxide + 2 H(+) = H2O2 + O2. Functionally, destroys radicals which are normally produced within the cells and which are toxic to biological systems. The polypeptide is Superoxide dismutase [Cu-Zn] (sod-1) (Onchocerca volvulus).